The primary structure comprises 471 residues: Heat shock 70 kDa protein 13 (471 aa).

The signal sequence occupies residues Met1–Ala22. Residues Asp317–Lys330 show a composition bias toward basic and acidic residues. The interval Asp317–Ser350 is disordered.

It belongs to the heat shock protein 70 family. In terms of assembly, binds UBQLN2.

It localises to the microsome. The protein resides in the endoplasmic reticulum. In terms of biological role, has peptide-independent ATPase activity. The polypeptide is Heat shock 70 kDa protein 13 (Hspa13) (Mus musculus (Mouse)).